A 370-amino-acid polypeptide reads, in one-letter code: Homospermidine synthase 2 (370 aa).

Belongs to the deoxyhypusine synthase family. Homotetramer. NAD(+) serves as cofactor. In terms of processing, the N-terminus is blocked. In terms of tissue distribution, expressed in roots.

It carries out the reaction putrescine + spermidine = sym-homospermidine + propane-1,3-diamine. Its pathway is alkaloid biosynthesis; pyrrolizidine alkaloid biosynthesis. In terms of biological role, catalyzes the transfer of an aminobutyl unit from spermidine onto putrescine. The resulting polyamine homospermidine is a precursor in the biosynthesis of pyrrolizidine alkaloids. This Senecio vernalis (Spring groundsel) protein is Homospermidine synthase 2.